A 940-amino-acid chain; its full sequence is Testis-expressed protein 11 (940 aa).

This sequence belongs to the SPO22 family. As to quaternary structure, interacts with SYCP2. Interacts with PBXIP1; may prevent interaction between PBXIP1 and ESR2. Interacts with SHOC1. Interacts with REDIC1. Testis-specific. Not expressed in adult ovaries.

It is found in the chromosome. In terms of biological role, regulator of crossing-over during meiosis. Involved in initiation and/or maintenance of chromosome synapsis and formation of crossovers. The sequence is that of Testis-expressed protein 11 (TEX11) from Homo sapiens (Human).